The primary structure comprises 167 residues: MTNNEQQKGAELQEKLVQVNRVAKVVKGGRIFGFTALTVVGDGNGKVGFGRGKAREVPVAIQKAMDAARKNMITVTLNGNTLQYPVKARHGSAKVFMQPASEGTGIIAGGAMRAVLEVAGVQNVLAKCYGSTNPVNVVRATFEGLKAMQAPEEIAAKRGKTVEEILG.

Residues 12–75 (LQEKLVQVNR…DAARKNMITV (64 aa)) form the S5 DRBM domain.

This sequence belongs to the universal ribosomal protein uS5 family. Part of the 30S ribosomal subunit. Contacts proteins S4 and S8.

Functionally, with S4 and S12 plays an important role in translational accuracy. Located at the back of the 30S subunit body where it stabilizes the conformation of the head with respect to the body. The protein is Small ribosomal subunit protein uS5 of Hahella chejuensis (strain KCTC 2396).